We begin with the raw amino-acid sequence, 211 residues long: Probable septum site-determining protein MinC (211 aa).

This sequence belongs to the MinC family. In terms of assembly, interacts with MinD and FtsZ.

Cell division inhibitor that blocks the formation of polar Z ring septums. Rapidly oscillates between the poles of the cell to destabilize FtsZ filaments that have formed before they mature into polar Z rings. Prevents FtsZ polymerization. This is Probable septum site-determining protein MinC from Clostridium perfringens (strain 13 / Type A).